The chain runs to 716 residues: Translation initiation factor IF-2 (716 aa).

Residues 53–135 are disordered; that stretch reads GGAGVTSQKP…PLKPKKELPE (83 aa). Over residues 57–83 the composition is skewed to polar residues; sequence VTSQKPAETNKNKPQGINQQPAGNQPN. Residues 93-109 are compositionally biased toward low complexity; it reads VQNNQFNKNKKNNNNNK. Positions 217 to 386 constitute a tr-type G domain; the sequence is IRPPVVTIMG…LLVSEVEELK (170 aa). The segment at 226 to 233 is G1; the sequence is GHVDHGKT. 226-233 lines the GTP pocket; it reads GHVDHGKT. Residues 251–255 form a G2 region; it reads GITQH. The interval 272–275 is G3; the sequence is DTPG. GTP-binding positions include 272 to 276 and 326 to 329; these read DTPGH and NKVD. The segment at 326 to 329 is G4; that stretch reads NKVD. Residues 362–364 are G5; the sequence is SAL.

Belongs to the TRAFAC class translation factor GTPase superfamily. Classic translation factor GTPase family. IF-2 subfamily.

The protein resides in the cytoplasm. One of the essential components for the initiation of protein synthesis. Protects formylmethionyl-tRNA from spontaneous hydrolysis and promotes its binding to the 30S ribosomal subunits. Also involved in the hydrolysis of GTP during the formation of the 70S ribosomal complex. The sequence is that of Translation initiation factor IF-2 from Bacillus velezensis (strain DSM 23117 / BGSC 10A6 / LMG 26770 / FZB42) (Bacillus amyloliquefaciens subsp. plantarum).